We begin with the raw amino-acid sequence, 178 residues long: Large ribosomal subunit protein uL6 (178 aa).

The protein belongs to the universal ribosomal protein uL6 family. As to quaternary structure, part of the 50S ribosomal subunit.

This protein binds to the 23S rRNA, and is important in its secondary structure. It is located near the subunit interface in the base of the L7/L12 stalk, and near the tRNA binding site of the peptidyltransferase center. This chain is Large ribosomal subunit protein uL6, found in Campylobacter hominis (strain ATCC BAA-381 / DSM 21671 / CCUG 45161 / LMG 19568 / NCTC 13146 / CH001A).